Consider the following 266-residue polypeptide: Regulatory protein RecX (266 aa).

This sequence belongs to the RecX family.

The protein localises to the cytoplasm. In terms of biological role, modulates RecA activity. The chain is Regulatory protein RecX from Leuconostoc citreum (strain KM20).